Reading from the N-terminus, the 477-residue chain is Glutamate--tRNA ligase (477 aa).

Residues 12 to 22 carry the 'HIGH' region motif; that stretch reads PSPTGMFHVGG. Zn(2+)-binding residues include C106, C108, C128, and D130. Positions 238 to 242 match the 'KMSKS' region motif; that stretch reads KLSKR. K241 provides a ligand contact to ATP.

Belongs to the class-I aminoacyl-tRNA synthetase family. Glutamate--tRNA ligase type 1 subfamily. In terms of assembly, monomer. Requires Zn(2+) as cofactor.

It is found in the cytoplasm. It catalyses the reaction tRNA(Glu) + L-glutamate + ATP = L-glutamyl-tRNA(Glu) + AMP + diphosphate. Its function is as follows. Catalyzes the attachment of glutamate to tRNA(Glu) in a two-step reaction: glutamate is first activated by ATP to form Glu-AMP and then transferred to the acceptor end of tRNA(Glu). The polypeptide is Glutamate--tRNA ligase (Thermobifida fusca (strain YX)).